A 319-amino-acid polypeptide reads, in one-letter code: Acetyl-coenzyme A carboxylase carboxyl transferase subunit alpha (319 aa).

In terms of domain architecture, CoA carboxyltransferase C-terminal spans 32-293 (NVDAEVRALR…KAVLLNELDA (262 aa)).

The protein belongs to the AccA family. In terms of assembly, acetyl-CoA carboxylase is a heterohexamer composed of biotin carboxyl carrier protein (AccB), biotin carboxylase (AccC) and two subunits each of ACCase subunit alpha (AccA) and ACCase subunit beta (AccD).

It localises to the cytoplasm. It carries out the reaction N(6)-carboxybiotinyl-L-lysyl-[protein] + acetyl-CoA = N(6)-biotinyl-L-lysyl-[protein] + malonyl-CoA. Its pathway is lipid metabolism; malonyl-CoA biosynthesis; malonyl-CoA from acetyl-CoA: step 1/1. In terms of biological role, component of the acetyl coenzyme A carboxylase (ACC) complex. First, biotin carboxylase catalyzes the carboxylation of biotin on its carrier protein (BCCP) and then the CO(2) group is transferred by the carboxyltransferase to acetyl-CoA to form malonyl-CoA. The polypeptide is Acetyl-coenzyme A carboxylase carboxyl transferase subunit alpha (Xanthomonas campestris pv. campestris (strain B100)).